The sequence spans 431 residues: Probable sodium/metabolite cotransporter BASS3, chloroplastic (431 aa).

A chloroplast-targeting transit peptide spans 1-70 (MTLIASLSLP…RRNSGLVPVV (70 aa)). Helical transmembrane passes span 110–130 (FWSALLPFVVALTAVAALSYP), 145–165 (LGGIMLSIGIQLSVDDFALAF), 169–189 (VPLSVGFVAQYVLKPLLGVLV), 198–218 (TFYAGFILTCCVAGAQLSSYA), 238–258 (IASVIFTPLLSGLLIGSVVPV), 261–281 (VAMSKSILQVVLVPITLGLVL), 288–308 (VVTLLQPVMPFVAMVCTSLCI), 325–345 (LGLIVPIVTFHAVAFALGYWF), and 387–407 (VPAACSVVVMAIMGLCLASFW).

Belongs to the bile acid:sodium symporter (BASS) (TC 2.A.28) family.

The protein localises to the membrane. Its subcellular location is the plastid. The protein resides in the chloroplast envelope. In terms of biological role, may function as sodium-coupled metabolite transporter across the chloroplast envelope. The protein is Probable sodium/metabolite cotransporter BASS3, chloroplastic (BASS3) of Arabidopsis thaliana (Mouse-ear cress).